We begin with the raw amino-acid sequence, 148 residues long: Deoxyuridine 5'-triphosphate nucleotidohydrolase (148 aa).

Residues 65-67 (RSG), Asn-78, 82-84 (TID), and Lys-92 contribute to the substrate site.

Belongs to the dUTPase family. Mg(2+) serves as cofactor.

The enzyme catalyses dUTP + H2O = dUMP + diphosphate + H(+). It participates in pyrimidine metabolism; dUMP biosynthesis; dUMP from dCTP (dUTP route): step 2/2. Functionally, this enzyme is involved in nucleotide metabolism: it produces dUMP, the immediate precursor of thymidine nucleotides and it decreases the intracellular concentration of dUTP so that uracil cannot be incorporated into DNA. This is Deoxyuridine 5'-triphosphate nucleotidohydrolase from Chlorobium luteolum (strain DSM 273 / BCRC 81028 / 2530) (Pelodictyon luteolum).